Consider the following 238-residue polypeptide: Triggering receptor expressed on myeloid cells 1 (238 aa).

The signal sequence occupies residues 1–20; that stretch reads MRSARLGRLLWMLFITEIQA. An Ig-like V-type domain is found at 21 to 129; sequence ATELPEEKYI…KDPIILFYPV (109 aa). At 21–210 the chain is on the extracellular side; sequence ATELPEEKYI…DITRDTEISL (190 aa). Cysteines 41 and 113 form a disulfide. Asn-135 carries an N-linked (GlcNAc...) asparagine glycan. Positions 141-169 are disordered; that stretch reads PASAETPTQSCSPTTTLPPTTTTNRHRPR. Low complexity predominate over residues 146–163; the sequence is TPTQSCSPTTTLPPTTTT. A glycan (N-linked (GlcNAc...) asparagine) is linked at Asn-198. Residues 211–231 form a helical membrane-spanning segment; it reads ILPAVCGLLSKSLVFIVLFVV. Residues 232 to 238 lie on the Cytoplasmic side of the membrane; that stretch reads TRMSFTP.

Monomer. Homomultimer; when activated. Interacts with TYROBP/DAP12. Interacts with TLR4.

Its subcellular location is the cell membrane. Its function is as follows. Cell surface receptor that plays important roles in innate and adaptive immunity by amplifying inflammatory responses. Upon activation by various ligands such as PGLYRP1, HMGB1 or HSP70, multimerizes and forms a complex with transmembrane adapter TYROBP/DAP12. In turn, initiates a SYK-mediated cascade of tyrosine phosphorylation, activating multiple downstream mediators such as BTK, MAPK1, MAPK3 or phospholipase C-gamma. This cascade promotes the neutrophil- and macrophage-mediated release of pro-inflammatory cytokines and/or chemokines, as well as their migration and thereby amplifies inflammatory responses that are triggered by bacterial and fungal infections. By also promoting the amplification of inflammatory signals that are initially triggered by Toll-like receptor (TLR) and NOD-like receptor engagement, plays a major role in the pathophysiology of acute and chronic inflammatory diseases of different etiologies including septic shock and atherosclerosis. This Sus scrofa (Pig) protein is Triggering receptor expressed on myeloid cells 1 (TREM1).